The chain runs to 173 residues: 2-C-methyl-D-erythritol 2,4-cyclodiphosphate synthase (173 aa).

A divalent metal cation contacts are provided by D17 and H19. Residues 17-19 (DVH) and 49-50 (HS) contribute to the 4-CDP-2-C-methyl-D-erythritol 2-phosphate site. Residue H57 coordinates a divalent metal cation. 4-CDP-2-C-methyl-D-erythritol 2-phosphate-binding positions include 76-80 (FPNTD), 147-150 (TTTE), F154, and R157.

Belongs to the IspF family. As to quaternary structure, homotrimer. Requires a divalent metal cation as cofactor.

It carries out the reaction 4-CDP-2-C-methyl-D-erythritol 2-phosphate = 2-C-methyl-D-erythritol 2,4-cyclic diphosphate + CMP. It participates in isoprenoid biosynthesis; isopentenyl diphosphate biosynthesis via DXP pathway; isopentenyl diphosphate from 1-deoxy-D-xylulose 5-phosphate: step 4/6. Its function is as follows. Involved in the biosynthesis of isopentenyl diphosphate (IPP) and dimethylallyl diphosphate (DMAPP), two major building blocks of isoprenoid compounds. Catalyzes the conversion of 4-diphosphocytidyl-2-C-methyl-D-erythritol 2-phosphate (CDP-ME2P) to 2-C-methyl-D-erythritol 2,4-cyclodiphosphate (ME-CPP) with a corresponding release of cytidine 5-monophosphate (CMP). In Ehrlichia canis (strain Jake), this protein is 2-C-methyl-D-erythritol 2,4-cyclodiphosphate synthase.